We begin with the raw amino-acid sequence, 155 residues long: Ribosome maturation factor RimP (155 aa).

It belongs to the RimP family.

Its subcellular location is the cytoplasm. Its function is as follows. Required for maturation of 30S ribosomal subunits. This Listeria monocytogenes serovar 1/2a (strain ATCC BAA-679 / EGD-e) protein is Ribosome maturation factor RimP.